Consider the following 511-residue polypeptide: Bifunctional purine biosynthesis protein PurH (511 aa).

Positions 1–146 constitute an MGS-like domain; the sequence is MTKRALVSVS…KNHADVTVVV (146 aa).

Belongs to the PurH family.

The enzyme catalyses (6R)-10-formyltetrahydrofolate + 5-amino-1-(5-phospho-beta-D-ribosyl)imidazole-4-carboxamide = 5-formamido-1-(5-phospho-D-ribosyl)imidazole-4-carboxamide + (6S)-5,6,7,8-tetrahydrofolate. It catalyses the reaction IMP + H2O = 5-formamido-1-(5-phospho-D-ribosyl)imidazole-4-carboxamide. It participates in purine metabolism; IMP biosynthesis via de novo pathway; 5-formamido-1-(5-phospho-D-ribosyl)imidazole-4-carboxamide from 5-amino-1-(5-phospho-D-ribosyl)imidazole-4-carboxamide (10-formyl THF route): step 1/1. The protein operates within purine metabolism; IMP biosynthesis via de novo pathway; IMP from 5-formamido-1-(5-phospho-D-ribosyl)imidazole-4-carboxamide: step 1/1. The polypeptide is Bifunctional purine biosynthesis protein PurH (Shouchella clausii (strain KSM-K16) (Alkalihalobacillus clausii)).